The chain runs to 358 residues: Putative hydrogenase expression/formation protein MJ0993 (358 aa).

3 residues coordinate Fe cation: C33, C61, and C64.

The protein belongs to the HypD family.

This Methanocaldococcus jannaschii (strain ATCC 43067 / DSM 2661 / JAL-1 / JCM 10045 / NBRC 100440) (Methanococcus jannaschii) protein is Putative hydrogenase expression/formation protein MJ0993.